The chain runs to 177 residues: Putative acetyltransferase FG08082 (177 aa).

The N-acetyltransferase domain maps to 81–174 (EEWEQVGLVR…VSIAMVEGPG (94 aa)).

Belongs to the acetyltransferase family.

It participates in mycotoxin biosynthesis. Its function is as follows. Putative acetyltransferase; part of the gene cluster that mediates the biosynthesis of butenolide, a mycotoxin that shows antibiotic activity but does not seem to play a major role in the spread of head blight in wheat. Butenolide is derived from glutamic acid via a 4-acetamido-2-butenoic acid intermediate. The predicted function of the NADH:flavin oxidoreductase FG08077, the cytochrome P450 monooxygenase FG08079, the decarboxylase FG08083, and the putative acetyltransferase FG08082 are consistent with this pathway, however, the respective activities of the butelonide biosynthesis cluster enzymes have still to be experimentally determined. The polypeptide is Putative acetyltransferase FG08082 (Gibberella zeae (strain ATCC MYA-4620 / CBS 123657 / FGSC 9075 / NRRL 31084 / PH-1) (Wheat head blight fungus)).